The chain runs to 328 residues: Beta-ketoacyl-[acyl-carrier-protein] synthase III (328 aa).

Catalysis depends on residues Cys122 and His255. Residues 256 to 260 are ACP-binding; sequence QANVR. Asn285 is an active-site residue.

Belongs to the thiolase-like superfamily. FabH family. In terms of assembly, homodimer.

Its subcellular location is the cytoplasm. The enzyme catalyses malonyl-[ACP] + acetyl-CoA + H(+) = 3-oxobutanoyl-[ACP] + CO2 + CoA. It functions in the pathway lipid metabolism; fatty acid biosynthesis. In terms of biological role, catalyzes the condensation reaction of fatty acid synthesis by the addition to an acyl acceptor of two carbons from malonyl-ACP. Catalyzes the first condensation reaction which initiates fatty acid synthesis and may therefore play a role in governing the total rate of fatty acid production. Possesses both acetoacetyl-ACP synthase and acetyl transacylase activities. Its substrate specificity determines the biosynthesis of branched-chain and/or straight-chain of fatty acids. In Bordetella pertussis (strain Tohama I / ATCC BAA-589 / NCTC 13251), this protein is Beta-ketoacyl-[acyl-carrier-protein] synthase III.